The sequence spans 360 residues: Ribosomal RNA large subunit methyltransferase M (360 aa).

Residues S187, 220 to 223 (CPGG), D239, D259, and D276 each bind S-adenosyl-L-methionine. The active-site Proton acceptor is K305.

It belongs to the class I-like SAM-binding methyltransferase superfamily. RNA methyltransferase RlmE family. RlmM subfamily. As to quaternary structure, monomer.

The protein resides in the cytoplasm. The catalysed reaction is cytidine(2498) in 23S rRNA + S-adenosyl-L-methionine = 2'-O-methylcytidine(2498) in 23S rRNA + S-adenosyl-L-homocysteine + H(+). Functionally, catalyzes the 2'-O-methylation at nucleotide C2498 in 23S rRNA. The chain is Ribosomal RNA large subunit methyltransferase M from Shewanella pealeana (strain ATCC 700345 / ANG-SQ1).